Consider the following 209-residue polypeptide: Probable chalcone--flavanone isomerase 3 (209 aa).

It belongs to the chalcone isomerase family.

It catalyses the reaction a chalcone = a flavanone.. It functions in the pathway secondary metabolite biosynthesis; flavonoid biosynthesis. In terms of biological role, involved in anthocyanin biosynthesis. The chain is Probable chalcone--flavanone isomerase 3 (CHI3) from Arabidopsis thaliana (Mouse-ear cress).